We begin with the raw amino-acid sequence, 352 residues long: Protein RecA (352 aa).

67 to 74 (GPESSGKT) contributes to the ATP binding site.

It belongs to the RecA family.

The protein resides in the cytoplasm. Can catalyze the hydrolysis of ATP in the presence of single-stranded DNA, the ATP-dependent uptake of single-stranded DNA by duplex DNA, and the ATP-dependent hybridization of homologous single-stranded DNAs. It interacts with LexA causing its activation and leading to its autocatalytic cleavage. This is Protein RecA from Klebsiella pneumoniae subsp. pneumoniae (strain ATCC 700721 / MGH 78578).